The primary structure comprises 437 residues: Glutamyl-tRNA reductase (437 aa).

Substrate is bound by residues 46–49, Ser-111, 116–118, and Gln-122; these read TCNR and ERE. Catalysis depends on Cys-47, which acts as the Nucleophile. 192 to 197 contacts NADP(+); sequence GTGAYA. The tract at residues 413–437 is disordered; it reads PDVPEETAPSTRQDPSDTPRPRAVG. Basic and acidic residues predominate over residues 426-437; it reads DPSDTPRPRAVG.

This sequence belongs to the glutamyl-tRNA reductase family. Homodimer.

The catalysed reaction is (S)-4-amino-5-oxopentanoate + tRNA(Glu) + NADP(+) = L-glutamyl-tRNA(Glu) + NADPH + H(+). It functions in the pathway porphyrin-containing compound metabolism; protoporphyrin-IX biosynthesis; 5-aminolevulinate from L-glutamyl-tRNA(Glu): step 1/2. Catalyzes the NADPH-dependent reduction of glutamyl-tRNA(Glu) to glutamate 1-semialdehyde (GSA). This Kocuria rhizophila (strain ATCC 9341 / DSM 348 / NBRC 103217 / DC2201) protein is Glutamyl-tRNA reductase.